We begin with the raw amino-acid sequence, 1269 residues long: ATP-dependent helicase/nuclease subunit A (1269 aa).

In terms of domain architecture, UvrD-like helicase ATP-binding spans 17 to 492 (GGWTAEQLEA…LALTANFRSR (476 aa)). 38–45 (ASAGTGKT) serves as a coordination point for ATP. Positions 541-838 (AVELHLVERG…RIMSIHKSKG (298 aa)) constitute a UvrD-like helicase C-terminal domain.

This sequence belongs to the helicase family. AddA subfamily. In terms of assembly, heterodimer of AddA and AddB/RexB. Requires Mg(2+) as cofactor.

It catalyses the reaction Couples ATP hydrolysis with the unwinding of duplex DNA by translocating in the 3'-5' direction.. The enzyme catalyses ATP + H2O = ADP + phosphate + H(+). In terms of biological role, the heterodimer acts as both an ATP-dependent DNA helicase and an ATP-dependent, dual-direction single-stranded exonuclease. Recognizes the chi site generating a DNA molecule suitable for the initiation of homologous recombination. The AddA nuclease domain is required for chi fragment generation; this subunit has the helicase and 3' -&gt; 5' nuclease activities. The polypeptide is ATP-dependent helicase/nuclease subunit A (Pelotomaculum thermopropionicum (strain DSM 13744 / JCM 10971 / SI)).